The chain runs to 494 residues: PIGF/3-ketodihydrosphingosine reductase fusion protein (494 aa).

NADPH-binding residues include glycine 20, serine 22, and glycine 24. The GXSXG motif lies at 20–24 (GGSQG). Leucine 25 is a binding site for NADP(+). NADPH is bound by residues arginine 45 and lysine 49. Valine 54 contributes to the NADP(+) binding site. Aspartate 74 and leucine 75 together coordinate NADPH. Residues 148–168 (ILLVGSLLSSLPIIGYSAYSP) form a helical membrane-spanning segment. 3 residues coordinate NADP(+): tyrosine 166, lysine 170, and isoleucine 199. Catalysis depends on tyrosine 166, which acts as the Proton acceptor. The active-site Lowers pKa of active site Tyr is the lysine 170. 6 helical membrane-spanning segments follow: residues 264-284 (HDNP…WPFY), 312-332 (IFTL…LNCL), 370-390 (LAGA…LVAF), 402-422 (YFCA…TLAF), 444-464 (LRSW…PLDW), and 473-493 (ITIV…GEIL).

This sequence in the N-terminal section; belongs to the short-chain dehydrogenases/reductases (SDR) family. It in the C-terminal section; belongs to the PIGF family.

It localises to the endoplasmic reticulum membrane. It catalyses the reaction sphinganine + NADP(+) = 3-oxosphinganine + NADPH + H(+). It participates in glycolipid biosynthesis; glycosylphosphatidylinositol-anchor biosynthesis. It functions in the pathway lipid metabolism; sphingolipid metabolism. Its function is as follows. Acts in the GPI biosynthetic pathway between GlcNAc-PI synthesis and GPI transfer to protein. Required for the formation of complete GPI precursors CP1 and CP2. Catalyzes the reduction of 3'-oxosphinganine (3-ketodihydrosphingosine/KDS) to sphinganine (dihydrosphingosine/DHS), the second step of de novo sphingolipid biosynthesis. The sequence is that of PIGF/3-ketodihydrosphingosine reductase fusion protein from Schizosaccharomyces pombe (strain 972 / ATCC 24843) (Fission yeast).